The sequence spans 276 residues: MLMITSFANPRVAQAFVDYMATQGVILTIQQHNQSDIWLADESQAERVRVELARFIENPGDPRYLAASWQSGQTNSGLRYRRFPFLATLRERAGPVTWIVMIACVLVYIAMSLIGDQTVMVWLAWPFDPVLKFEVWRYFTHIFMHFSLMHILFNLLWWWYLGGAVEKRLGSGKLIVITVVSALLSGYVQQKFSGPWFGGLSGVVYALMGYVWLRGERDPQSGIYLQRGLIIFALLWIVAGWFDWFGMSMANGAHIAGLIVGLAMAFVDTLNARKRT.

Helical transmembrane passes span 94-114, 142-162, 169-189, 192-212, 229-249, and 250-270; these read GPVTWIVMIACVLVYIAMSLI, IFMHFSLMHILFNLLWWWYLG, LGSGKLIVITVVSALLSGYVQ, FSGPWFGGLSGVVYALMGYVW, LIIFALLWIVAGWFDWFGMSM, and ANGAHIAGLIVGLAMAFVDTL. S201 functions as the Nucleophile in the catalytic mechanism. Residue H254 is part of the active site.

Belongs to the peptidase S54 family.

It localises to the cell inner membrane. The enzyme catalyses Cleaves type-1 transmembrane domains using a catalytic dyad composed of serine and histidine that are contributed by different transmembrane domains.. In terms of biological role, rhomboid-type serine protease that catalyzes intramembrane proteolysis. In Salmonella choleraesuis (strain SC-B67), this protein is Rhomboid protease GlpG.